The following is a 225-amino-acid chain: NAD(P)H-quinone oxidoreductase subunit K, chloroplastic (225 aa).

[4Fe-4S] cluster is bound by residues C43, C44, C108, and C139.

This sequence belongs to the complex I 20 kDa subunit family. As to quaternary structure, NDH is composed of at least 16 different subunits, 5 of which are encoded in the nucleus. [4Fe-4S] cluster serves as cofactor.

It localises to the plastid. The protein resides in the chloroplast thylakoid membrane. It carries out the reaction a plastoquinone + NADH + (n+1) H(+)(in) = a plastoquinol + NAD(+) + n H(+)(out). It catalyses the reaction a plastoquinone + NADPH + (n+1) H(+)(in) = a plastoquinol + NADP(+) + n H(+)(out). Functionally, NDH shuttles electrons from NAD(P)H:plastoquinone, via FMN and iron-sulfur (Fe-S) centers, to quinones in the photosynthetic chain and possibly in a chloroplast respiratory chain. The immediate electron acceptor for the enzyme in this species is believed to be plastoquinone. Couples the redox reaction to proton translocation, and thus conserves the redox energy in a proton gradient. In Solanum bulbocastanum (Wild potato), this protein is NAD(P)H-quinone oxidoreductase subunit K, chloroplastic.